A 516-amino-acid polypeptide reads, in one-letter code: BAR/IMD domain-containing adapter protein 2-like 1 (516 aa).

In terms of domain architecture, IMD spans 1-249 (MSRGPEEVNR…MNMIEEIKTP (249 aa)). The stretch at 115-148 (MNATLKRYQAEHRNKLDSLEKSQAELKKIRRKSQ) forms a coiled coil. Phosphothreonine is present on residues Thr248 and Thr257. A phosphoserine mark is found at Ser261 and Ser281. Residues 303–328 (NPATAGQSAEKTNNSTANTGDDPSLQ) form a disordered region. Ser332 carries the post-translational modification Phosphoserine. An SH3 domain is found at 340 to 403 (MKKQKVKTIF…PSSYTKLLEE (64 aa)). Thr413 carries the post-translational modification Phosphothreonine. Phosphoserine occurs at positions 415, 421, and 423. The tract at residues 454–516 (ADAAKIPSTS…TNDRSAPIIR (63 aa)) is disordered. Residues 474-485 (ATSTSPSDSNGT) are compositionally biased toward polar residues. A binds F-actin region spans residues 488–516 (PPFLSGENPFATVKLRPTVTNDRSAPIIR).

In terms of assembly, interacts with RAC1. Binds to F-actin. Interacts with FASLG. Phosphorylated on tyrosine in response to insulin.

It localises to the cytoplasm. The protein resides in the cytoskeleton. Its function is as follows. May function as adapter protein. Involved in the formation of clusters of actin bundles. Plays a role in the reorganization of the actin cytoskeleton in response to bacterial infection. This is BAR/IMD domain-containing adapter protein 2-like 1 (Baiap2l1) from Rattus norvegicus (Rat).